The following is an 86-amino-acid chain: MKQTMYKPKRSFRRNLTPIRRHLSPIGSGDRIDYKNMSLISRFISEQGXILSGRVNRLTSKQQRLMTNAIKRARILSLLPFLYNEN.

Belongs to the bacterial ribosomal protein bS18 family. As to quaternary structure, part of the 30S ribosomal subunit.

The protein resides in the plastid. Its subcellular location is the chloroplast. In Pseudotsuga menziesii (Douglas-fir), this protein is Small ribosomal subunit protein bS18c.